We begin with the raw amino-acid sequence, 350 residues long: Heat-inducible transcription repressor HrcA (350 aa).

It belongs to the HrcA family.

Its function is as follows. Negative regulator of class I heat shock genes (grpE-dnaK-dnaJ and groELS operons). Prevents heat-shock induction of these operons. In Xanthomonas campestris pv. campestris (strain ATCC 33913 / DSM 3586 / NCPPB 528 / LMG 568 / P 25), this protein is Heat-inducible transcription repressor HrcA.